The primary structure comprises 396 residues: Probable tRNA sulfurtransferase (396 aa).

The 112-residue stretch at 58 to 169 (NQFIEKLKMV…KKNIYVFTRS (112 aa)) folds into the THUMP domain. ATP contacts are provided by residues 187–188 (LL), 212–213 (YF), R269, G291, and Q300.

It belongs to the ThiI family.

The protein localises to the cytoplasm. It catalyses the reaction [ThiI sulfur-carrier protein]-S-sulfanyl-L-cysteine + a uridine in tRNA + 2 reduced [2Fe-2S]-[ferredoxin] + ATP + H(+) = [ThiI sulfur-carrier protein]-L-cysteine + a 4-thiouridine in tRNA + 2 oxidized [2Fe-2S]-[ferredoxin] + AMP + diphosphate. The catalysed reaction is [ThiS sulfur-carrier protein]-C-terminal Gly-Gly-AMP + S-sulfanyl-L-cysteinyl-[cysteine desulfurase] + AH2 = [ThiS sulfur-carrier protein]-C-terminal-Gly-aminoethanethioate + L-cysteinyl-[cysteine desulfurase] + A + AMP + 2 H(+). It participates in cofactor biosynthesis; thiamine diphosphate biosynthesis. Catalyzes the ATP-dependent transfer of a sulfur to tRNA to produce 4-thiouridine in position 8 of tRNAs, which functions as a near-UV photosensor. Also catalyzes the transfer of sulfur to the sulfur carrier protein ThiS, forming ThiS-thiocarboxylate. This is a step in the synthesis of thiazole, in the thiamine biosynthesis pathway. The sulfur is donated as persulfide by IscS. This chain is Probable tRNA sulfurtransferase, found in Halothermothrix orenii (strain H 168 / OCM 544 / DSM 9562).